A 309-amino-acid chain; its full sequence is MTQEERFEQRIAQETAIEPQDWMPDAYRKTLIRQIGQHAHSEIVGMLPEGNWITRAPTLRRKAILLAKVQDEAGHGLYLYSAAETLGCAREDIYQKMLDGRMKYSSIFNYPTLSWADIGVIGWLVDGAAIVNQVALCRTSYGPYARAMVKICKEESFHQRQGFEACMALAQGSEAQKQMLQDAINRFWWPALMMFGPNDDNSPNSARSLTWKIKRFTNDELRQRFVDNTVPQVEMLGMTVPDPDLHFDTESGHYRFGEIDWQEFNEVINGRGICNQERLDAKRKAWEEGTWVREAALAHAQKQHARKVA.

Residues Arg33, Gln37, Lys103–Ser106, Asn132, Met193, Ser202–Asn204, Lys214, and Asn218 each bind substrate.

As to quaternary structure, forms a stable heterotetramer (dimer of heterodimers) with PaaC. The cofactor is Fe cation.

It carries out the reaction phenylacetyl-CoA + NADPH + O2 + H(+) = 2-(1,2-epoxy-1,2-dihydrophenyl)acetyl-CoA + NADP(+) + H2O. The protein operates within aromatic compound metabolism; phenylacetate degradation. Its function is as follows. Component of 1,2-phenylacetyl-CoA epoxidase multicomponent enzyme system which catalyzes the reduction of phenylacetyl-CoA (PA-CoA) to form 1,2-epoxyphenylacetyl-CoA. The subunit A is the catalytic subunit involved in the incorporation of one atom of molecular oxygen into phenylacetyl-CoA. This is 1,2-phenylacetyl-CoA epoxidase, subunit A (paaA) from Escherichia coli (strain K12).